Reading from the N-terminus, the 232-residue chain is MKELQTVLKNHFAIEFADKNLLETAFTHTSYANEHRLLKISHNERLEFLGDAVLQLLISEYLYKKYPKKPEGDLSKLRAMIVREESLAGFARDCQFNQFIKLGKGEEKSGGRNRDTILGDAFEAFLGALLLDKDVAKVKEFIYQVIIPKVEAGEFEMITDYKTHLQELLQVNGDVAIRYQVISETGPAHDKVFDVEVLVEGKSIGQGQGRSKKLAEQEAAKNAVEKGLDSCI.

An RNase III domain is found at 5-134 (QTVLKNHFAI…FLGALLLDKD (130 aa)). Glu-47 provides a ligand contact to Mg(2+). Asp-51 is a catalytic residue. Asp-120 and Glu-123 together coordinate Mg(2+). Residue Glu-123 is part of the active site. The DRBM domain maps to 160–229 (DYKTHLQELL…AKNAVEKGLD (70 aa)).

Belongs to the ribonuclease III family. Homodimer. It depends on Mg(2+) as a cofactor.

The protein resides in the cytoplasm. The enzyme catalyses Endonucleolytic cleavage to 5'-phosphomonoester.. In terms of biological role, digests double-stranded RNA. Involved in the processing of primary rRNA transcript to yield the immediate precursors to the large and small rRNAs (23S and 16S). Processes some mRNAs, and tRNAs when they are encoded in the rRNA operon. Processes pre-crRNA and tracrRNA of type II CRISPR loci if present in the organism. The polypeptide is Ribonuclease 3 (Streptococcus pneumoniae (strain P1031)).